A 158-amino-acid chain; its full sequence is MALSADIVGMHYRYPDHYEVEREKIREYAVAVQNDDAWYFEEDGAAELGYKGLLAPLTFICVFGYKAQAAFFKHANIATAEAQIVQVDQVLKFEKPIVAGDKLYCDVYVDSVREAHGTQIIVTKNIVTNEEGDLVQETYTTLAGRAGEDGEGFSDGAA.

This sequence belongs to the UPF0336 family.

This Mycobacterium bovis (strain ATCC BAA-935 / AF2122/97) protein is UPF0336 protein Mb0654.